Consider the following 847-residue polypeptide: Leucine--tRNA ligase (847 aa).

Residues 41–51 (PYPSGRIHMGH) carry the 'HIGH' region motif. The 'KMSKS' region motif lies at 619–623 (KMSKS). Lys-622 contributes to the ATP binding site.

The protein belongs to the class-I aminoacyl-tRNA synthetase family.

It localises to the cytoplasm. The catalysed reaction is tRNA(Leu) + L-leucine + ATP = L-leucyl-tRNA(Leu) + AMP + diphosphate. This Cereibacter sphaeroides (strain ATCC 17023 / DSM 158 / JCM 6121 / CCUG 31486 / LMG 2827 / NBRC 12203 / NCIMB 8253 / ATH 2.4.1.) (Rhodobacter sphaeroides) protein is Leucine--tRNA ligase.